A 154-amino-acid polypeptide reads, in one-letter code: Myoglobin (154 aa).

The Globin domain maps to Gly-2–Lys-148. The residue at position 4 (Ser-4) is a Phosphoserine. Position 65 (His-65) interacts with nitrite. Position 65 (His-65) interacts with O2. A Phosphothreonine modification is found at Thr-68. A heme b-binding site is contributed by His-94.

The protein belongs to the globin family. In terms of assembly, monomeric.

Its subcellular location is the cytoplasm. It localises to the sarcoplasm. The catalysed reaction is Fe(III)-heme b-[protein] + nitric oxide + H2O = Fe(II)-heme b-[protein] + nitrite + 2 H(+). It catalyses the reaction H2O2 + AH2 = A + 2 H2O. Functionally, monomeric heme protein which primary function is to store oxygen and facilitate its diffusion within muscle tissues. Reversibly binds oxygen through a pentacoordinated heme iron and enables its timely and efficient release as needed during periods of heightened demand. Depending on the oxidative conditions of tissues and cells, and in addition to its ability to bind oxygen, it also has a nitrite reductase activity whereby it regulates the production of bioactive nitric oxide. Under stress conditions, like hypoxia and anoxia, it also protects cells against reactive oxygen species thanks to its pseudoperoxidase activity. The polypeptide is Myoglobin (MB) (Otolemur crassicaudatus (Brown greater galago)).